A 229-amino-acid polypeptide reads, in one-letter code: uncharacterized protein (229 aa).

7 consecutive transmembrane segments (helical) span residues 1–21, 32–52, 58–78, 100–120, 139–159, 178–198, and 206–226; these read MFGT…GGIF, ILMQ…ITQH, YPIL…IINL, TAVL…EAAL, IVLA…LFSW, LINE…LSIL, and LNLL…HAFG.

The protein resides in the cell membrane. This is an uncharacterized protein from Bacillus subtilis (strain 168).